The following is a 1021-amino-acid chain: Collagenase ColH (1021 aa).

The first 30 residues, 1–30, serve as a signal peptide directing secretion; the sequence is MKRKCLSKRLMLAITMATIFTVNSTLPIYA. The propeptide occupies 31 to 40; sequence AVDKNNATAA. The tract at residues 41–320 is activator domain; the sequence is VQNESKRYTV…SADQIKRHYD (280 aa). Residues 41–717 form an S1 metalloprotease domain region; that stretch reads VQNESKRYTV…TYDVVFHGYL (677 aa). The segment at 330-601 is catalytic subdomain; the sequence is PLDKFKKEGK…MQERIDNYEN (272 aa). Asp-421 serves as a coordination point for Zn(2+). Glu-430 lines the Ca(2+) pocket. His-455 provides a ligand contact to Zn(2+). Glu-456 is a catalytic residue. Residue His-459 coordinates Zn(2+). Residues Gly-463, Val-467, and Gly-469 each contribute to the Ca(2+) site. Glu-487 provides a ligand contact to Zn(2+). Residues 609-721 are helper subdomain; sequence DDYLVRHAYK…VFHGYLPNEG (113 aa). The tract at residues 718-810 is S2a domain; it reads PNEGDSKNSL…VSTTTAEIKD (93 aa). The Ca(2+) site is built by Asn-725, Ser-726, Asp-753, Asp-755, Asp-794, Asn-814, Lys-815, Asp-842, Asp-844, Asp-884, Glu-908, Glu-910, Asn-912, Asn-913, Thr-931, Asp-937, Gln-938, and Asp-939. Residues 727–808 form the PKD 1 domain; that stretch reads LPYGKINGTY…SSVSTTTAEI (82 aa). Residues 811–904 are S2b domain; it reads LSENKLPVIY…KIKITDPVYP (94 aa). The PKD 2 domain occupies 816-905; sequence LPVIYMHVPK…IKITDPVYPI (90 aa). Positions 903–922 are disordered; it reads YPIGTEKEPNNSKETASGPI. Residues 905–1021 form an S3 collagen-binding domain region; sequence IGTEKEPNNS…RINIEGSVGR (117 aa). The tract at residues 1002-1004 is collagen-binding; that stretch reads YMF.

This sequence belongs to the peptidase M9B family. Collagenase subfamily. Requires Ca(2+) as cofactor. Zn(2+) serves as cofactor. Post-translationally, upon purification gives rise to 98 kDa, 105 kDa and 116 kDa (full-length) proteins, all of which have the same N-terminus.

The protein resides in the secreted. It carries out the reaction Digestion of native collagen in the triple helical region at Xaa-|-Gly bonds. With synthetic peptides, a preference is shown for Gly at P3 and P1', Pro and Ala at P2 and P2', and hydroxyproline, Ala or Arg at P3'.. Inhibited by EDTA. Inhibited by 1-10-phenanthroline. Inhibited by broad-spectrum zinc metalloprotease inhibitor batimastat. N-aryl mercaptoacetamide-based inhibitors have been isolated that act on clostridial collagenases with submicromolar affinity while having negligibile activity on human collagenases. Functionally, clostridial collagenases are among the most efficient degraders of eukaryotic collagen known; saprophytes use collagen as a carbon source while pathogens additionally digest collagen to aid in host colonization. Has both tripeptidylcarboxypeptidase on Gly-X-Y and endopeptidase activities; the endopeptidase cuts within the triple helix region of collagen while tripeptidylcarboxypeptidase successively digests the exposed ends, thus clostridial collagenases can digest large sections of collagen. The full-length protein has collagenase activity, while both the 116 kDa and 98 kDa forms act on gelatin. In vitro digestion of soluble calf skin collagen fibrils requires both ColG and ColH; ColG forms missing the second collagen-binding domain is also synergistic with ColH, although their overall efficiency is decreased. Digestion of collagen requires Ca(2+) and is inhibited by EDTA. The activator domain (residues 119-388) and catalytic subdomain (330-601) open and close around substrate allowing digestion when the protein is closed. The polypeptide is Collagenase ColH (Hathewaya histolytica (Clostridium histolyticum)).